Consider the following 301-residue polypeptide: Ribosome-inactivating protein (301 aa).

A propeptide spans 1 to 16 (MAEITLEPSDLMAQTN) (or 12 (in 10% of the molecules)). The propeptide occupies 162 to 186 (MATLEEEEVKMQMQMPEAADLAAAA). The active site involves E207. The propeptide occupies 258–301 (VIPDMQKLGIKDKNEAARIVALVKNQTTAAAATAASADNDDDEA).

This sequence belongs to the ribosome-inactivating protein family. Type 1 RIP subfamily. As to quaternary structure, synthesized and stored in the kernel as a 34 kDa inactive precursor. During germination, this neutral precursor is converted into a basic, active form by limited proteolysis, which removes 25 AA of net charge -6 from the center of the polypeptide chain. Additional processing also occurs at the N- and C-termini of the polypeptide. A two-chain active RIP (comprised of 16.5 and 8.5 kDa fragments that remain tightly associated) is produced from this processing event.

It catalyses the reaction Endohydrolysis of the N-glycosidic bond at one specific adenosine on the 28S rRNA.. Its function is as follows. Potent catalytic inactivator of eukaryotic protein synthesis. It may be a component of natural defense mechanisms involved in protecting the kernel against soil-borne fungal infections. This Zea mays (Maize) protein is Ribosome-inactivating protein.